The chain runs to 346 residues: UDP-N-acetylenolpyruvoylglucosamine reductase (346 aa).

Positions 23-194 (FDVRARLACR…VSVTFRLPKV (172 aa)) constitute an FAD-binding PCMH-type domain. Arg-170 is a catalytic residue. Ser-246 (proton donor) is an active-site residue. Glu-342 is an active-site residue.

The protein belongs to the MurB family. Requires FAD as cofactor.

Its subcellular location is the cytoplasm. It catalyses the reaction UDP-N-acetyl-alpha-D-muramate + NADP(+) = UDP-N-acetyl-3-O-(1-carboxyvinyl)-alpha-D-glucosamine + NADPH + H(+). Its pathway is cell wall biogenesis; peptidoglycan biosynthesis. Cell wall formation. The sequence is that of UDP-N-acetylenolpyruvoylglucosamine reductase from Paraburkholderia phymatum (strain DSM 17167 / CIP 108236 / LMG 21445 / STM815) (Burkholderia phymatum).